A 647-amino-acid polypeptide reads, in one-letter code: NADP-dependent malic enzyme, chloroplastic (647 aa).

Residues M1–A61 constitute a chloroplast transit peptide. Y195 acts as the Proton donor in catalysis. NAD(+) is bound at residue R248. The Proton acceptor role is filled by K266. The a divalent metal cation site is built by E338, D339, and D362. An NAD(+)-binding site is contributed by D362. L391 to A407 provides a ligand contact to NADP(+). N503 provides a ligand contact to NAD(+).

This sequence belongs to the malic enzymes family. As to quaternary structure, homotetramer. Requires Mg(2+) as cofactor. Mn(2+) serves as cofactor.

The protein localises to the plastid. Its subcellular location is the chloroplast. The enzyme catalyses (S)-malate + NADP(+) = pyruvate + CO2 + NADPH. It carries out the reaction oxaloacetate + H(+) = pyruvate + CO2. It participates in photosynthesis; C3 acid pathway. The chloroplastic ME isoform decarboxylates malate shuttled from neighboring mesophyll cells. The CO(2) released is then refixed by ribulose-bisphosphate carboxylase. This pathway eliminates the photorespiratory loss of CO(2) that occurs in most plants. The polypeptide is NADP-dependent malic enzyme, chloroplastic (MODA) (Flaveria pringlei).